Consider the following 409-residue polypeptide: NADH-quinone oxidoreductase subunit D (409 aa).

This sequence belongs to the complex I 49 kDa subunit family. As to quaternary structure, NDH-1 is composed of 14 different subunits. Subunits NuoB, C, D, E, F, and G constitute the peripheral sector of the complex.

The protein resides in the cell inner membrane. It carries out the reaction a quinone + NADH + 5 H(+)(in) = a quinol + NAD(+) + 4 H(+)(out). Functionally, NDH-1 shuttles electrons from NADH, via FMN and iron-sulfur (Fe-S) centers, to quinones in the respiratory chain. The immediate electron acceptor for the enzyme in this species is believed to be ubiquinone. Couples the redox reaction to proton translocation (for every two electrons transferred, four hydrogen ions are translocated across the cytoplasmic membrane), and thus conserves the redox energy in a proton gradient. This is NADH-quinone oxidoreductase subunit D from Helicobacter pylori (strain HPAG1).